The following is a 997-amino-acid chain: Glutamate [NMDA] receptor subunit 1 (997 aa).

The signal sequence occupies residues Met1 to Ala26. The Extracellular portion of the chain corresponds to Ala27–Ser573. Residues Asn258, Asn314, Asn345, Asn397, Asn454, Asn481, and Asn501 are each glycosylated (N-linked (GlcNAc...) asparagine). Residues Pro530–Thr532 and Arg537 each bind glycine. The helical transmembrane segment at Asn574–Leu594 threads the bilayer. Over Asp595–Trp651 the chain is Cytoplasmic. Residues Ala652 to Leu672 traverse the membrane as a helical segment. Residues Glu673 to Asn831 are Extracellular-facing. The N-linked (GlcNAc...) asparagine glycan is linked to Asn693. Glycine is bound by residues Ser703 and Asp747. The chain crosses the membrane as a helical span at residues Met832 to Ile852. The Cytoplasmic portion of the chain corresponds to Glu853–Val997. The disordered stretch occupies residues Leu970–Val997. The span at Gly987–Val997 shows a compositional bias: polar residues.

Belongs to the glutamate-gated ion channel (TC 1.A.10.1) family. Forms a heteromeric NMDA channel with Nmdar2.

The protein resides in the cell membrane. The protein localises to the postsynaptic cell membrane. Its subcellular location is the postsynaptic density. In terms of biological role, NMDA receptor subtype of glutamate-gated ion channels with high calcium permeability and voltage-dependent sensitivity to magnesium. Mediated by glycine. This protein plays a key role in synaptic plasticity, synaptogenesis, excitotoxicity, memory acquisition and learning. It mediates neuronal functions in glutamate neurotransmission. Is involved in the cell surface targeting of NMDA receptors. Plays a role in associative learning and in long-term memory consolidation. This chain is Glutamate [NMDA] receptor subunit 1, found in Drosophila sechellia (Fruit fly).